The following is a 212-amino-acid chain: MAIGLIGRKVGMTRIFAEDGVSIPVTVIEIASNRVTQVKTLETDGYRALQVTTGTKKANRITKPEAGHFAKAGVEAGRGLWEVRLADGEGESIEVGAELNVDIFADVAKVDVTGQSKGKGFQGGIKRWNFHAQDMTHGNSLAHRSNGSIGQNQTPGRVFKGKKMSGHMGAERVTTQNLDVVRVDAERNLLLVKGAVPGATNGNLIIKPAVKA.

Residue Gln153 is modified to N5-methylglutamine.

The protein belongs to the universal ribosomal protein uL3 family. As to quaternary structure, part of the 50S ribosomal subunit. Forms a cluster with proteins L14 and L19. Methylated by PrmB.

One of the primary rRNA binding proteins, it binds directly near the 3'-end of the 23S rRNA, where it nucleates assembly of the 50S subunit. The polypeptide is Large ribosomal subunit protein uL3 (Shewanella sediminis (strain HAW-EB3)).